The primary structure comprises 1203 residues: DNA-directed RNA polymerase subunit beta' (1203 aa).

Positions 60, 62, 75, and 78 each coordinate Zn(2+). Positions 449, 451, and 453 each coordinate Mg(2+). Zn(2+)-binding residues include C818, C892, C899, and C902. The interval 1180–1203 is disordered; that stretch reads RNLESGLDMPESAEESSEEETQTV. Acidic residues predominate over residues 1190-1203; it reads ESAEESSEEETQTV.

Belongs to the RNA polymerase beta' chain family. In terms of assembly, the RNAP catalytic core consists of 2 alpha, 1 beta, 1 beta' and 1 omega subunit. When a sigma factor is associated with the core the holoenzyme is formed, which can initiate transcription. Mg(2+) serves as cofactor. The cofactor is Zn(2+).

The catalysed reaction is RNA(n) + a ribonucleoside 5'-triphosphate = RNA(n+1) + diphosphate. Its function is as follows. DNA-dependent RNA polymerase catalyzes the transcription of DNA into RNA using the four ribonucleoside triphosphates as substrates. This is DNA-directed RNA polymerase subunit beta' from Oceanobacillus iheyensis (strain DSM 14371 / CIP 107618 / JCM 11309 / KCTC 3954 / HTE831).